The chain runs to 247 residues: Glucosamine-6-phosphate deaminase (247 aa).

Asp67 (proton acceptor; for enolization step) is an active-site residue. Residue Asn136 is the For ring-opening step of the active site. His138 functions as the Proton acceptor; for ring-opening step in the catalytic mechanism. Glu143 (for ring-opening step) is an active-site residue.

Belongs to the glucosamine/galactosamine-6-phosphate isomerase family. NagB subfamily.

It carries out the reaction alpha-D-glucosamine 6-phosphate + H2O = beta-D-fructose 6-phosphate + NH4(+). Its pathway is amino-sugar metabolism; N-acetylneuraminate degradation; D-fructose 6-phosphate from N-acetylneuraminate: step 5/5. Its function is as follows. Catalyzes the reversible isomerization-deamination of glucosamine 6-phosphate (GlcN6P) to form fructose 6-phosphate (Fru6P) and ammonium ion. The chain is Glucosamine-6-phosphate deaminase from Shouchella clausii (strain KSM-K16) (Alkalihalobacillus clausii).